Reading from the N-terminus, the 627-residue chain is uncharacterized protein (627 aa).

Positions 1 to 20 (MAKFKKDLTTKNKDTDRLSE) are enriched in basic and acidic residues. Disordered stretches follow at residues 1 to 22 (MAKF…SEEI) and 578 to 606 (LSLG…LLPV). The segment covering 582-592 (SEEEQGQEETE) has biased composition (acidic residues).

This is an uncharacterized protein from Rickettsia prowazekii (strain Madrid E).